Reading from the N-terminus, the 277-residue chain is Small ribosomal subunit protein uS2 (277 aa).

The disordered stretch occupies residues 254–277; that stretch reads LAGAGSSALNDSGADLSEANPTEA.

This sequence belongs to the universal ribosomal protein uS2 family.

In Mycobacterium leprae (strain TN), this protein is Small ribosomal subunit protein uS2 (rpsB).